Here is a 629-residue protein sequence, read N- to C-terminus: MTKFEQYFDYVKISLASPEKIRQWGERSLPNGQIVGEITKPETINYRTLKPEMDGLFCEKIFGPVKDWECHCGKYKRFRYKGIVCERCGVEVTESRVRRHRMAYIELASPVTHVWYLKGSTSYIALALDLKVKEVEKIVYFHSYVVTQSNTDINLKYKQLLEGYEWKSLEEEIYQNQDENNQVEVGIGAEAIQKLLKDLDLEHIAETLRSEATNPPKSFKTPSLKFNKKMKRLRLIENFIATGADPSWMVFTVIPVIPPDLRPMVQLDGGRFATADLNEFYRRIINRNNRLSRLKSILAPEIIIRNEKRMLQEAVDSLMDNGRRGRTVVGANNRPLKSLSDIIEGKQGRFRQNLLGKRVDYSGRSVIVVGPHLKLHQCGLPREMALELFQPFVIHRLILQGLVNNIKAAKKMIQKNESSIWNVLNEVIQGHPVLLNRAPTLHRLGIQAFEPILVEGRAIKLHPLVCPAFNADFDGDQMAVHVPLSLEAQAEARLLMLAPHNFLSPATGQPIIMPSQDMVLGCYYLTANNPSQQQGSNQYFASLEDVVMAYEQKKIDLHSYIWARFDGLVDGDQPHDPIKIEKHSDNSTTKFFNNHIIKEDAENQRIVQYIRTTAGRIIFNKIIQESLLA.

Cysteine 70, cysteine 72, cysteine 85, and cysteine 88 together coordinate Zn(2+). Aspartate 472, aspartate 474, and aspartate 476 together coordinate Mg(2+).

This sequence belongs to the RNA polymerase beta' chain family. RpoC1 subfamily. As to quaternary structure, in plastids the minimal PEP RNA polymerase catalytic core is composed of four subunits: alpha, beta, beta', and beta''. When a (nuclear-encoded) sigma factor is associated with the core the holoenzyme is formed, which can initiate transcription. Requires Mg(2+) as cofactor. Zn(2+) is required as a cofactor.

It is found in the plastid. The protein resides in the chloroplast. The catalysed reaction is RNA(n) + a ribonucleoside 5'-triphosphate = RNA(n+1) + diphosphate. DNA-dependent RNA polymerase catalyzes the transcription of DNA into RNA using the four ribonucleoside triphosphates as substrates. The sequence is that of DNA-directed RNA polymerase subunit beta' from Pyropia yezoensis (Susabi-nori).